The primary structure comprises 426 residues: MKLQKPKGTQDILPGDAAKWQYVESVARDTFSQYNYGEIRTPMFEHYEVISRSVGDTTDIVTKEMYDFYDKGDRHITLRPEGTAPVVRSYVENKLFAPEVQKPVKLYYIGSMFRYERPQAGRLREFHQIGVECFGAANPATDVETIAMAYHLFEKLGIKDVTLHLNSLGSPESRAAYRQALIDYLTPMRDQLSKDSQRRLDENPLRVLDSKEKEDKLAVEKAPSILDYLDEESQAHFEAVKDMLEALDIPYVIDTNMVRGLDYYNHTIFEFITSVEGSDLTICAGGRYDSLVGYFGGPETPGFGFGLGLERLLMVIEKQGITLPIETEMDVYLAVLGDGANSKALELVQAIRRQGFTAERDYLGRKIKAQFKSADTFKAKLVMTLGESEVEAGKAVIKNNRSRQEVEVSFEDMMTNFANISEQLLS.

It belongs to the class-II aminoacyl-tRNA synthetase family. In terms of assembly, homodimer.

The protein resides in the cytoplasm. It catalyses the reaction tRNA(His) + L-histidine + ATP = L-histidyl-tRNA(His) + AMP + diphosphate + H(+). The polypeptide is Histidine--tRNA ligase (Streptococcus pyogenes serotype M6 (strain ATCC BAA-946 / MGAS10394)).